The primary structure comprises 230 residues: Large ribosomal subunit protein uL1 (230 aa).

This sequence belongs to the universal ribosomal protein uL1 family. Part of the 50S ribosomal subunit.

Binds directly to 23S rRNA. The L1 stalk is quite mobile in the ribosome, and is involved in E site tRNA release. Functionally, protein L1 is also a translational repressor protein, it controls the translation of the L11 operon by binding to its mRNA. The polypeptide is Large ribosomal subunit protein uL1 (Leptospira borgpetersenii serovar Hardjo-bovis (strain JB197)).